Consider the following 616-residue polypeptide: MEALFLSSSSSSIVASNKLTRLHNHCVWSTVIRDKKRFGPTWCRVGGGGDGGRNSNAERPIRVSSLLKDRGQVLIREQSSPAMDAETLVLSPNGNGRTIEINGVKTLMPFSGASMVGMKEGLGIISFLQGKKFLITGSTGFLAKVLIEKVLRMAPDVSKIYLLIKAKSKEAAIERLKNEVLDAELFNTLKETHGASYMSFMLTKLIPVTGNICDSNIGLQADSAEEIAKEVDVIINSAANTTFNERYDVALDINTRGPGNLMGFAKKCKKLKLFLQVSTAYVNGQRQGRIMEKPFSMGDCIATENFLEGNRKALDVDREMKLALEAARKGTQNQDEAQKMKDLGLERARSYGWQDTYVFTKAMGEMMINSTRGDVPVVIIRPSVIESTYKDPFPGWMEGNRMMDPIVLCYGKGQLTGFLVDPKGVLDVVPADMVVNATLAAIAKHGMAMSDPEPEINVYQIASSAINPLVFEDLAELLYNHYKTSPCMDSKGDPIMVRLMKLFNSVDDFSDHLWRDAQERSGLMSGMSSVDSKMMQKLKFICKKSVEQAKHLATIYEPYTFYGGRFDNSNTQRLMENMSEDEKREFGFDVGSINWTDYITNVHIPGLRRHVLKGRA.

Residues 1 to 14 (MEALFLSSSSSSIV) constitute a chloroplast transit peptide. The NAD(P)H-binding signature appears at 133–143 (FLITGSTGFLA). Residues Tyr-357 and Lys-361 contribute to the active site.

The protein belongs to the fatty acyl-CoA reductase family. As to expression, expressed in the tapetum of anthers.

The protein resides in the plastid. It is found in the chloroplast. The catalysed reaction is a long-chain fatty acyl-CoA + 2 NADPH + 2 H(+) = a long-chain primary fatty alcohol + 2 NADP(+) + CoA. The enzyme catalyses hexadecanoyl-CoA + 2 NADPH + 2 H(+) = hexadecan-1-ol + 2 NADP(+) + CoA. It catalyses the reaction hexadecanoyl-[ACP] + 2 NADPH + 2 H(+) = hexadecan-1-ol + holo-[ACP] + 2 NADP(+). In terms of biological role, catalyzes the reduction of fatty acyl-CoA and -ACP (acyl carrier protein) substrates to fatty alcohols. Triggers the accumulation of C16 and C18 fatty alcohols; converts palmitoyl-acyl carrier protein to the corresponding C16:0 alcohol with NAD(P)H as electron donor, but seems inactive toward palmitoyl- or other acyl-coenzyme A. Also triggers the formation of some C16:0 aldehydes. Involved in the synthesis of the lipid component in sporopollenin. Required for exine patterning of pollen grain by mediating the formation of pollen wall substances. This chain is Fatty acyl-CoA reductase 2, chloroplastic, found in Arabidopsis thaliana (Mouse-ear cress).